The following is an 880-amino-acid chain: Alanine--tRNA ligase (880 aa).

Residues His-568, His-572, Cys-670, and His-674 each coordinate Zn(2+).

Belongs to the class-II aminoacyl-tRNA synthetase family. The cofactor is Zn(2+).

The protein localises to the cytoplasm. The enzyme catalyses tRNA(Ala) + L-alanine + ATP = L-alanyl-tRNA(Ala) + AMP + diphosphate. In terms of biological role, catalyzes the attachment of alanine to tRNA(Ala) in a two-step reaction: alanine is first activated by ATP to form Ala-AMP and then transferred to the acceptor end of tRNA(Ala). Also edits incorrectly charged Ser-tRNA(Ala) and Gly-tRNA(Ala) via its editing domain. This chain is Alanine--tRNA ligase, found in Enterococcus faecalis (strain ATCC 700802 / V583).